The primary structure comprises 283 residues: Glutamate racemase (283 aa).

Substrate-binding positions include 13–14 (DS) and 45–46 (YG). Cys76 serves as the catalytic Proton donor/acceptor. 77-78 (NT) serves as a coordination point for substrate. Cys186 (proton donor/acceptor) is an active-site residue. 187–188 (TH) lines the substrate pocket.

This sequence belongs to the aspartate/glutamate racemases family.

The catalysed reaction is L-glutamate = D-glutamate. Its pathway is cell wall biogenesis; peptidoglycan biosynthesis. Its function is as follows. Provides the (R)-glutamate required for cell wall biosynthesis. In Microcystis aeruginosa (strain NIES-843 / IAM M-2473), this protein is Glutamate racemase.